The chain runs to 158 residues: Persistence and stress-resistance toxin PasT (158 aa).

Residues 70 to 158 (GISKTFTTRN…VRAKEVYSAR (89 aa)) are required for resistance of nitrosative stress but not persistence or toxic effects.

This sequence belongs to the ribosome association toxin RatA family. In terms of assembly, associates with 50S ribosomes.

Toxic component of a type II toxin-antitoxin (TA) system. Binds to 50S ribosomal subunits, preventing them from associating with 30S subunits to form 70S ribosomes. In this strain of E.coli low levels of PasT complement operon disruption, however high levels are toxic; their effects are abrogated by high level expression of cognate antitoxin PasI. Plays a role in persistence after antibiotic exposure and survival of nitrosative stress; the toxic and persistence phenotypes are conferred by the same N-terminal region of the protein, while the stress resistance effects can be uncoupled from them in deletion mutants. The sequence is that of Persistence and stress-resistance toxin PasT (pasT) from Escherichia coli O6:H1 (strain CFT073 / ATCC 700928 / UPEC).